Reading from the N-terminus, the 476-residue chain is Glutamate--tRNA ligase (476 aa).

Residues 9 to 19 (PSPTGLFHIGT) carry the 'HIGH' region motif. Residues 248–252 (KLSKR) carry the 'KMSKS' region motif. Lysine 251 is an ATP binding site.

It belongs to the class-I aminoacyl-tRNA synthetase family. Glutamate--tRNA ligase type 1 subfamily. As to quaternary structure, monomer.

It is found in the cytoplasm. It catalyses the reaction tRNA(Glu) + L-glutamate + ATP = L-glutamyl-tRNA(Glu) + AMP + diphosphate. Its function is as follows. Catalyzes the attachment of glutamate to tRNA(Glu) in a two-step reaction: glutamate is first activated by ATP to form Glu-AMP and then transferred to the acceptor end of tRNA(Glu). The chain is Glutamate--tRNA ligase from Prochlorococcus marinus (strain AS9601).